Reading from the N-terminus, the 497-residue chain is Glucose-6-phosphate 1-dehydrogenase (497 aa).

NADP(+)-binding positions include 17-24 (GASGDLAK), arginine 51, and lysine 151. D-glucose 6-phosphate-binding positions include lysine 151, 181 to 185 (HYLGK), glutamate 219, and aspartate 238. Histidine 243 functions as the Proton acceptor in the catalytic mechanism. Lysine 334 serves as a coordination point for NADP(+). D-glucose 6-phosphate contacts are provided by lysine 337 and arginine 342. 3 residues coordinate NADP(+): lysine 343, arginine 347, and arginine 371. Residue glutamine 373 coordinates D-glucose 6-phosphate. Residues 379-381 (YLK), 399-401 (DLS), arginine 465, and tryptophan 487 contribute to the NADP(+) site.

Belongs to the glucose-6-phosphate dehydrogenase family.

The protein localises to the cytoplasm. The protein resides in the cytosol. It carries out the reaction D-glucose 6-phosphate + NADP(+) = 6-phospho-D-glucono-1,5-lactone + NADPH + H(+). Its pathway is carbohydrate degradation; pentose phosphate pathway; D-ribulose 5-phosphate from D-glucose 6-phosphate (oxidative stage): step 1/3. Its function is as follows. Cytosolic glucose-6-phosphate dehydrogenase that catalyzes the first and rate-limiting step of the oxidative branch within the pentose phosphate pathway/shunt, an alternative route to glycolysis for the dissimilation of carbohydrates and a major source of reducing power and metabolic intermediates for fatty acid and nucleic acid biosynthetic processes. The protein is Glucose-6-phosphate 1-dehydrogenase (g6pd-1) of Dictyostelium discoideum (Social amoeba).